The chain runs to 947 residues: MLDKLLRLGEGRMVKRLKKVADYVNTLSDDVEKLSDAELRAKTDEFRKRIDGGEDLDDLLPEAFAVAREAAWRVLSQRHFDVQVMGGAALHFGNVAEMKTGEGKTLTCVLPAYLNALSGKGVHVVTVNDYLAKRDAEWMGRVHRFLGLDVGVILSGLTPDERRAAYHADITYGTNNEFGFDYLRDNMAHRLEDRVQRGHNFAVVDEVDSILIDEARTPLIISGPADAASNWYSEFARLAPLMEKDVHYEVDLRKRTVGVHEVGVEFVEDQLGIENLYEAANSPLVSYLNNALKAKELFQRDKDYIVRNGEVLIVDEFTGRVLLGRRYNEGMHQAIEAKEHVEIKAENQTLATITLQNYFRLYDKLAGMTGTAQTEAAELHEIYKLGVVPIPTNRDMIRQDQTDLIYKTEEAKFIAVVDDVYERYEKGQPVLIGTTSVERSEYLSKQFTKRKIPHNVLNAKYHEQEANIIAEAGRLGAITVATNMAGRGTDIVLGGNVDFLADKRLREQGLDPIETPEEYEAAWESTLNQIKAEAEEEADDVRAVGGLYVLGTERHESRRIDNQLRGRSGRQGDPGESRFYLSLGDELMRRFNGATLEALLTRLNLPDDVPIEAKMVTRAIKSAQTQVEQQNFEVRKNVLKYDEVMNQQRKVIYEERRRILEGEDLAEQAHKMLVDVVTAYVNGATAEGYAEDWDLEQLWTALKQLYPVGIDYHDLVDSDAVGEAGELTREELLDMLIKDAERAYAERERELEELAGEGAMRQLERNVLLNVIDRKWREHLYEMDYLKEGIGLRAMAQRDPLVEYQREGYDMFVGMLEALKEESVGFLFNVTVEAAPPAPSNRVAPVAAPPGLSEFAAAAAKAQEQTGQGAVATKERETPAPTLRAKGIDNDDTPPLTYVGPGEDGTAEVQRSNGGPRHAAPGGATRRERREAARKQAKTSKPTRRRG.

ATP-binding positions include Q83, 101–105 (GEGKT), and D490. The segment at 860–947 (AKAQEQTGQG…KTSKPTRRRG (88 aa)) is disordered. Residues 925 to 934 (TRRERREAAR) show a composition bias toward basic and acidic residues. The segment covering 935–947 (KQAKTSKPTRRRG) has biased composition (basic residues).

This sequence belongs to the SecA family. In terms of assembly, monomer and homodimer. Part of the essential Sec protein translocation apparatus which comprises SecA, SecYEG and auxiliary proteins SecDF. Other proteins may also be involved.

The protein resides in the cell membrane. It localises to the cytoplasm. The enzyme catalyses ATP + H2O + cellular proteinSide 1 = ADP + phosphate + cellular proteinSide 2.. Part of the Sec protein translocase complex. Interacts with the SecYEG preprotein conducting channel. Has a central role in coupling the hydrolysis of ATP to the transfer of proteins into and across the cell membrane, serving as an ATP-driven molecular motor driving the stepwise translocation of polypeptide chains across the membrane. This chain is Protein translocase subunit SecA 1, found in Mycobacterium sp. (strain JLS).